The primary structure comprises 309 residues: Homoserine kinase (309 aa).

91 to 101 (PIGSGLGSSAC) provides a ligand contact to ATP.

Belongs to the GHMP kinase family. Homoserine kinase subfamily.

The protein localises to the cytoplasm. It catalyses the reaction L-homoserine + ATP = O-phospho-L-homoserine + ADP + H(+). Its pathway is amino-acid biosynthesis; L-threonine biosynthesis; L-threonine from L-aspartate: step 4/5. Functionally, catalyzes the ATP-dependent phosphorylation of L-homoserine to L-homoserine phosphate. This is Homoserine kinase from Pectobacterium carotovorum subsp. carotovorum (strain PC1).